The chain runs to 289 residues: Thymidylate synthase (289 aa).

DUMP contacts are provided by residues arginine 21 and 150 to 151; that span reads RR. The active-site Nucleophile is cysteine 170. DUMP contacts are provided by residues 191 to 194, asparagine 202, and 232 to 234; these read RSGD and HIY. Residue aspartate 194 coordinates (6R)-5,10-methylene-5,6,7,8-tetrahydrofolate. Alanine 288 contacts (6R)-5,10-methylene-5,6,7,8-tetrahydrofolate.

The protein belongs to the thymidylate synthase family. Bacterial-type ThyA subfamily. In terms of assembly, homodimer.

Its subcellular location is the cytoplasm. It catalyses the reaction dUMP + (6R)-5,10-methylene-5,6,7,8-tetrahydrofolate = 7,8-dihydrofolate + dTMP. It functions in the pathway pyrimidine metabolism; dTTP biosynthesis. Catalyzes the reductive methylation of 2'-deoxyuridine-5'-monophosphate (dUMP) to 2'-deoxythymidine-5'-monophosphate (dTMP) while utilizing 5,10-methylenetetrahydrofolate (mTHF) as the methyl donor and reductant in the reaction, yielding dihydrofolate (DHF) as a by-product. This enzymatic reaction provides an intracellular de novo source of dTMP, an essential precursor for DNA biosynthesis. The protein is Thymidylate synthase of Mycoplasmopsis synoviae (strain 53) (Mycoplasma synoviae).